The primary structure comprises 257 residues: Deoxyribose-phosphate aldolase (257 aa).

Aspartate 102 serves as the catalytic Proton donor/acceptor. Lysine 165 functions as the Schiff-base intermediate with acetaldehyde in the catalytic mechanism. Catalysis depends on lysine 199, which acts as the Proton donor/acceptor.

Belongs to the DeoC/FbaB aldolase family. DeoC type 2 subfamily.

Its subcellular location is the cytoplasm. It catalyses the reaction 2-deoxy-D-ribose 5-phosphate = D-glyceraldehyde 3-phosphate + acetaldehyde. Its pathway is carbohydrate degradation; 2-deoxy-D-ribose 1-phosphate degradation; D-glyceraldehyde 3-phosphate and acetaldehyde from 2-deoxy-alpha-D-ribose 1-phosphate: step 2/2. In terms of biological role, catalyzes a reversible aldol reaction between acetaldehyde and D-glyceraldehyde 3-phosphate to generate 2-deoxy-D-ribose 5-phosphate. The chain is Deoxyribose-phosphate aldolase from Photobacterium profundum (strain SS9).